The chain runs to 830 residues: Periplasmic nitrate reductase (830 aa).

Residues 1-32 (MELNRRDFMKANAAVAAAAAAGITIPVKNVHA) constitute a signal peptide (tat-type signal). Residues 39 to 95 (IRWDKAPCRYCGTGCSVLVGTKDGRVVATQGDPDAEVNRGLNCIKGYFLSKIMYGAD) form the 4Fe-4S Mo/W bis-MGD-type domain. Residues Cys-46, Cys-49, Cys-53, and Cys-81 each coordinate [4Fe-4S] cluster. Mo-bis(molybdopterin guanine dinucleotide) is bound by residues Lys-83, Gln-151, Asn-176, Cys-180, 213-220 (WGSNMAEM), 244-248 (STFEH), Met-374, Gln-378, Asn-484, 510-511 (SD), Lys-533, Asp-560, and 720-729 (TGRVLEHWHT). Phe-796 serves as a coordination point for substrate. Mo-bis(molybdopterin guanine dinucleotide)-binding residues include Asn-804 and Lys-821.

The protein belongs to the prokaryotic molybdopterin-containing oxidoreductase family. NasA/NapA/NarB subfamily. In terms of assembly, component of the periplasmic nitrate reductase NapAB complex composed of NapA and NapB. [4Fe-4S] cluster serves as cofactor. Mo-bis(molybdopterin guanine dinucleotide) is required as a cofactor. Post-translationally, predicted to be exported by the Tat system. The position of the signal peptide cleavage has not been experimentally proven.

The protein localises to the periplasm. It catalyses the reaction 2 Fe(II)-[cytochrome] + nitrate + 2 H(+) = 2 Fe(III)-[cytochrome] + nitrite + H2O. Catalytic subunit of the periplasmic nitrate reductase complex NapAB. Receives electrons from NapB and catalyzes the reduction of nitrate to nitrite. This Mannheimia succiniciproducens (strain KCTC 0769BP / MBEL55E) protein is Periplasmic nitrate reductase.